Reading from the N-terminus, the 281-residue chain is Proteasome subunit beta (281 aa).

A propeptide spans 1–53 (MEANTRSTGRLPAAFLTPGSSSFMDFLSDQSPEMLPGNRSLPPLQGAVEAPHG) (removed in mature form; by autocatalysis). Threonine 54 serves as the catalytic Nucleophile.

The protein belongs to the peptidase T1B family. In terms of assembly, the 20S proteasome core is composed of 14 alpha and 14 beta subunits that assemble into four stacked heptameric rings, resulting in a barrel-shaped structure. The two inner rings, each composed of seven catalytic beta subunits, are sandwiched by two outer rings, each composed of seven alpha subunits. The catalytic chamber with the active sites is on the inside of the barrel. Has a gated structure, the ends of the cylinder being occluded by the N-termini of the alpha-subunits. Is capped by the proteasome-associated ATPase, ARC.

It localises to the cytoplasm. The catalysed reaction is Cleavage of peptide bonds with very broad specificity.. Its pathway is protein degradation; proteasomal Pup-dependent pathway. The formation of the proteasomal ATPase ARC-20S proteasome complex, likely via the docking of the C-termini of ARC into the intersubunit pockets in the alpha-rings, may trigger opening of the gate for substrate entry. Interconversion between the open-gate and close-gate conformations leads to a dynamic regulation of the 20S proteasome proteolysis activity. Component of the proteasome core, a large protease complex with broad specificity involved in protein degradation. In Streptomyces griseus subsp. griseus (strain JCM 4626 / CBS 651.72 / NBRC 13350 / KCC S-0626 / ISP 5235), this protein is Proteasome subunit beta.